We begin with the raw amino-acid sequence, 376 residues long: MSDSKEPRVQQLGLLEEDPTTSGIRLFPRDFQFQQIHGHKSSTGCLGHGALVLQLLSFTLLAGVLVAILVQVSKVPSSLSQEQSEQDAIYQNLTQLKAAVGELSEKSKLQEIYQELTQLKAAVGELPEKSKLQEIYQELTQLKAAVGELPEKSKLQEIYQELTQLKAAVGELPEKSKLQEIYQELTRLKAAVGELPEKSKLQEIYQELTQLKAALGKLPDQSKQQQIYQELTDLKTAFERLCRHCPKDWTFFQGNCYFMSNSQRNWHNSVTACQEVRAQLVVIKSAEEQNFLQLQTSRSNRFSWMGLSDLNQEGTWQWVDGSPLSPSFQRYWNSGEPNNSGNEDCAEFSGSGWNDNRCDVDNYWICKKPTVCFRDE.

The Cytoplasmic segment spans residues 1-49; sequence MSDSKEPRVQQLGLLEEDPTTSGIRLFPRDFQFQQIHGHKSSTGCLGHG. Residues 14–15 carry the Endocytosis signal motif; sequence LL. A helical; Signal-anchor for type II membrane protein transmembrane segment spans residues 50 to 70; it reads ALVLQLLSFTLLAGVLVAILV. Residues 71 to 376 are Extracellular-facing; it reads QVSKVPSSLS…KKPTVCFRDE (306 aa). An N-linked (GlcNAc...) asparagine glycan is attached at Asn-92. 6 consecutive repeat copies span residues 108–130, 131–153, 154–176, 177–199, 200–222, and 223–245. The segment at 108–246 is 6 X approximate tandem repeats; sequence KLQEIYQELT…AFERLCRHCP (139 aa). 4 disulfides stabilise this stretch: Cys-242-Cys-372, Cys-245-Cys-256, Cys-273-Cys-366, and Cys-345-Cys-358. The region spanning 251–367 is the C-type lectin domain; sequence FFQGNCYFMS…CDVDNYWICK (117 aa). Ca(2+) is bound by residues Glu-336, Asn-338, Ser-340, Glu-343, Asn-354, and Asp-355. A glycan (N-linked (GlcNAc...) asparagine) is linked at Asn-338.

Homotetramer.

The protein localises to the membrane. Functionally, probable pathogen-recognition receptor involved in peripheral immune surveillance in liver. May mediate the endocytosis of pathogens which are subsequently degraded in lysosomal compartments. Probably recognizes in a calcium-dependent manner high mannose N-linked oligosaccharides in a variety of pathogen antigens. Is a receptor for ICAM3, probably by binding to mannose-like carbohydrates. The chain is C-type lectin domain family 4 member M (CLEC4M) from Gorilla gorilla gorilla (Western lowland gorilla).